Consider the following 472-residue polypeptide: Zinc finger imprinted 3 (472 aa).

The KRAB domain maps to 8-80; the sequence is VTFEDVTVNF…EEEVLGSGRA (73 aa). 11 consecutive C2H2-type zinc fingers follow at residues 167 to 189, 195 to 217, 223 to 245, 251 to 273, 279 to 301, 307 to 329, 335 to 357, 363 to 385, 391 to 413, 419 to 441, and 447 to 470; these read LKCN…LRRH, FECH…QKTH, YKCE…QKMH, YQCK…EKIH, YQCN…KKVH, FQCT…QRIH, YKCS…EKIH, YECD…KKIH, YECN…QKTH, YRCS…KKTH, and YGCS…KRIH.

This sequence belongs to the krueppel C2H2-type zinc-finger protein family.

The protein localises to the nucleus. In terms of biological role, may be involved in transcriptional regulation. This is Zinc finger imprinted 3 (ZIM3) from Homo sapiens (Human).